The primary structure comprises 539 residues: Effector protein hopAB1 (539 aa).

Disordered stretches follow at residues M1–Q93, Q163–Q220, A230–L249, and R315–R336. Residues T18–S31 are compositionally biased toward basic and acidic residues. Positions S181–S194 are enriched in low complexity.

Belongs to the HopAB family.

It is found in the secreted. In terms of biological role, effector protein that plays different roles depending on the species and plant cultivars that interact with the pathogen. Acts as a virulence determinant by enhancing the development of disease symptoms and bacterial growth. Acts as an avirulence factor by eliciting hypersensitive response (HR) and plant resistance. This chain is Effector protein hopAB1 (hopAB1), found in Pseudomonas savastanoi pv. phaseolicola (strain 1448A / Race 6) (Pseudomonas syringae pv. phaseolicola (strain 1448A / Race 6)).